We begin with the raw amino-acid sequence, 1681 residues long: Meiosis regulator and mRNA stability factor 1 (1681 aa).

Residues 340-477 form the NYN domain; the sequence is IGVFWDIENC…ALLHHAHELI (138 aa). 2 disordered regions span residues 576 to 595 and 638 to 717; these read VNET…PKKV and QMQS…DVVF. The segment covering 638–647 has biased composition (polar residues); sequence QMQSKSNKTS. A compositionally biased stretch (basic and acidic residues) spans 648–658; sequence QQEKDKKRNGD. The span at 659–690 shows a compositional bias: polar residues; it reads KQGTLSQSSPLCTNQMLQTARNVGTDNTASKS. Over residues 692–715 the composition is skewed to basic and acidic residues; that stretch reads QKRDDTTRKSNADSQKEQKNKEDV. An RRM domain is found at 779–858; that stretch reads ADIQIGNLDY…KRIQVSLATG (80 aa). HTH OST-type domains follow at residues 863-937, 991-1067, 1087-1161, 1163-1238, 1247-1321, 1323-1398, 1399-1472, and 1474-1548; these read SLSL…SPMG, SLKT…HNKP, QLIQ…LTHR, QVKR…IPKR, RTKQ…LTEM, RIKA…INRK, SLRS…SVQL, and SLYV…LKND. The segment covering 1637–1648 has biased composition (polar residues); it reads EPSTQNICPQES. The interval 1637 to 1662 is disordered; sequence EPSTQNICPQESKSTKELPESPVKRQ. Residues 1649 to 1659 are compositionally biased toward basic and acidic residues; it reads KSTKELPESPV.

The protein resides in the peroxisome. Essential regulator of oogenesis required for female meiotic progression to repress transposable elements and preventing their mobilization, which is essential for the germline integrity. The polypeptide is Meiosis regulator and mRNA stability factor 1 (Xenopus tropicalis (Western clawed frog)).